Reading from the N-terminus, the 124-residue chain is Fluoride-specific ion channel FluC (124 aa).

4 helical membrane-spanning segments follow: residues 4 to 24 (IFYI…TTLV), 35 to 55 (YATF…FGYL), 63 to 83 (PYLK…FSAF), and 96 to 116 (ILIA…ATWT). Na(+) contacts are provided by Gly-75 and Thr-78.

Belongs to the fluoride channel Fluc/FEX (TC 1.A.43) family.

The protein resides in the cell inner membrane. The catalysed reaction is fluoride(in) = fluoride(out). Na(+) is not transported, but it plays an essential structural role and its presence is essential for fluoride channel function. In terms of biological role, fluoride-specific ion channel. Important for reducing fluoride concentration in the cell, thus reducing its toxicity. This is Fluoride-specific ion channel FluC from Flavobacterium psychrophilum (strain ATCC 49511 / DSM 21280 / CIP 103535 / JIP02/86).